The chain runs to 463 residues: uncharacterized protein (463 aa).

The HTH gntR-type domain maps to Ile-13–His-81. A DNA-binding region (H-T-H motif) is located at residues Lys-41–Glu-60. Lys-308 carries the post-translational modification N6-(pyridoxal phosphate)lysine.

This sequence in the C-terminal section; belongs to the class-I pyridoxal-phosphate-dependent aminotransferase family. Requires pyridoxal 5'-phosphate as cofactor.

This is an uncharacterized protein from Bacillus subtilis (strain 168).